Consider the following 172-residue polypeptide: MLDAFGKVVAQADARGEFISSAQFDALSKLASEGNKRLDAVQGITASAATIVSSAARSLFAEQPQLIAPGGNAYTNRRVAACLRDLEIVLRYITYATLAGDSSVLDDRCLNGLRETYQALGVPGSSVAVAIQKMKDAAVSVVNDPSGVTVGDCSALASEVASYFDRAAAAVV.

An N4-methylasparagine modification is found at asparagine 72. (2R,3E)-phycocyanobilin-binding residues include cysteine 82 and cysteine 153.

This sequence belongs to the phycobiliprotein family. As to quaternary structure, heterodimer of an alpha and a beta subunit, which further assembles into trimers and the trimers into hexamers. The basic functional unit of phycobiliproteins is a ring-shaped hexamer formed from two back-to-back trimers contacting via the alpha chain subunits. The trimers are composed of alpha/beta subunit heterodimers arranged around a three-fold axis of symmetry. The phycoerythrins also contain a gamma subunit which is located in the center of the hexamer. Contains two covalently linked phycocyanobilin chromophores.

It is found in the plastid. The protein localises to the cyanelle thylakoid membrane. In terms of biological role, light-harvesting photosynthetic bile pigment-protein from the phycobiliprotein complex (phycobilisome, PBS). Phycocyanin is the major phycobiliprotein in the PBS rod. This Cyanophora paradoxa protein is C-phycocyanin beta chain (cpcB).